A 130-amino-acid chain; its full sequence is Small ribosomal subunit protein uS9 (130 aa).

It belongs to the universal ribosomal protein uS9 family.

The protein is Small ribosomal subunit protein uS9 of Bacillus anthracis (strain A0248).